The sequence spans 298 residues: MASWEKEKELAHLHQPEDDPLPDLSLLLDMDQFEPTEGPDSNPGAEKIYLQLQVAPGDPSEKTYKFGYEDKEAQNPDLKMRNWVPDPEKMSKWACARLILCGLYNAKKAKELLKMDYDIHWEQSKEDSQYFEIEYHCKMCMTVIHEPMPVSYDKKTGLWIKMGPLRGDIGSVVHTCRRHYERCMSALPSSGEPLKPRVRANPVRRYREKSLIVADRPKRSRWGVAPREQPNTSSGDAMALMPGPCGPFNMDPPGCLLERVPGSEPGTSEMALAMSGGPFWEQVYRDSISGPPTGPSEN.

Residues 1-17 (MASWEKEKELAHLHQPE) are compositionally biased toward basic and acidic residues. Residues 1–46 (MASWEKEKELAHLHQPEDDPLPDLSLLLDMDQFEPTEGPDSNPGAE) form a disordered region. Residues 91–200 (SKWACARLIL…GEPLKPRVRA (110 aa)) mediate DNA binding. Residues 214–223 (ADRPKRSRWG) carry the Nuclear localization signal motif. Residues 225–298 (APREQPNTSS…SGPPTGPSEN (74 aa)) are transactivation domain.

As to quaternary structure, homodimer or homomultimer. Forms complexes with the host nuclear factors NFIA, NFIB, NFIC or NFIX.

The protein localises to the host nucleus. Functionally, transcriptional transactivator that activates the viral internal promoter (IP), thereby enhancing its own expression. This transactivation is repressed by nuclear factor I. Also transactivates the long terminal repeat (LTR) promoter, thereby inducing structural gene expression, initiating the late phase of infection. It is therefore a key regulator of viral gene expression. It directly binds to and activates DNA target sites of viral promoters and those of distinct cellular genes. Required for viral replication. This is Protein Bel-1 (bel1) from Chlorocebus aethiops (Green monkey).